A 103-amino-acid polypeptide reads, in one-letter code: uncharacterized protein (103 aa).

The CHCH domain occupies 10–63; the sequence is FPECDHLKQIYDKCFTEFFQKFITPNYRHQYAVNPCERLHDVYKRCVEERLATQ. 2 short sequence motifs (cx9C motif) span residues 13–23 and 45–55; these read CDHLKQIYDKC and CERLHDVYKRC. Disulfide bonds link C13/C55 and C23/C45. The segment covering 80–90 has biased composition (basic and acidic residues); that stretch reads TDDDKLKDRQN. The disordered stretch occupies residues 80 to 103; sequence TDDDKLKDRQNNQKTNSENKCSSS. Polar residues predominate over residues 91-103; that stretch reads NQKTNSENKCSSS.

It belongs to the TRIAP1/MDM35 family.

This is an uncharacterized protein from Caenorhabditis elegans.